The primary structure comprises 195 residues: ATP-dependent Clp protease proteolytic subunit 2 (195 aa).

The Nucleophile role is filled by Ser92. Residue His117 is part of the active site.

It belongs to the peptidase S14 family. As to quaternary structure, fourteen ClpP subunits assemble into 2 heptameric rings which stack back to back to give a disk-like structure with a central cavity, resembling the structure of eukaryotic proteasomes.

The protein localises to the cytoplasm. The enzyme catalyses Hydrolysis of proteins to small peptides in the presence of ATP and magnesium. alpha-casein is the usual test substrate. In the absence of ATP, only oligopeptides shorter than five residues are hydrolyzed (such as succinyl-Leu-Tyr-|-NHMec, and Leu-Tyr-Leu-|-Tyr-Trp, in which cleavage of the -Tyr-|-Leu- and -Tyr-|-Trp bonds also occurs).. In terms of biological role, cleaves peptides in various proteins in a process that requires ATP hydrolysis. Has a chymotrypsin-like activity. Plays a major role in the degradation of misfolded proteins. In Rhodococcus jostii (strain RHA1), this protein is ATP-dependent Clp protease proteolytic subunit 2.